The following is a 185-amino-acid chain: Ribosome-recycling factor (185 aa).

The protein belongs to the RRF family.

It localises to the cytoplasm. In terms of biological role, responsible for the release of ribosomes from messenger RNA at the termination of protein biosynthesis. May increase the efficiency of translation by recycling ribosomes from one round of translation to another. This is Ribosome-recycling factor from Nocardia farcinica (strain IFM 10152).